Consider the following 438-residue polypeptide: Transcriptional regulator Mb0495 (438 aa).

Residues 1-12 (MYSTNRTSQSLS) show a composition bias toward polar residues. The disordered stretch occupies residues 1 to 22 (MYSTNRTSQSLSRKPGRKHQLR). Residues 52–73 (VGRDVIAGSTSLSIATVNRQVI) constitute a DNA-binding region (H-T-H motif).

Belongs to the ROK (NagC/XylR) family.

Functionally, positively regulates the expression of PE13 and PPE18. This chain is Transcriptional regulator Mb0495, found in Mycobacterium bovis (strain ATCC BAA-935 / AF2122/97).